We begin with the raw amino-acid sequence, 636 residues long: Chitin synthase VI (636 aa).

4 helical membrane passes run 23-43 (LQWF…LFCI), 374-394 (TIRT…TTTA), 399-419 (LPVG…LYFG), and 427-447 (IWFY…YMVY). Residues 595–636 (QRLRLEQRPRTGPSLNARWQNGPQASETSQGRSQVDDVGIAF) are disordered. Positions 607 to 627 (PSLNARWQNGPQASETSQGRS) are enriched in polar residues.

It belongs to the chitin synthase family. Class VI subfamily. In terms of tissue distribution, moderately expressed during appressorium formation.

Its subcellular location is the cell membrane. It catalyses the reaction [(1-&gt;4)-N-acetyl-beta-D-glucosaminyl](n) + UDP-N-acetyl-alpha-D-glucosamine = [(1-&gt;4)-N-acetyl-beta-D-glucosaminyl](n+1) + UDP + H(+). Polymerizes chitin, a structural polymer of the cell wall and septum, by transferring the sugar moiety of UDP-GlcNAc to the non-reducing end of the growing chitin polymer. Contributes to the production of conidia but is the only chitine synthase that does not contribute to the ability of fungal conidia to germinate. Involved in fungal stress tolerances. The polypeptide is Chitin synthase VI (Metarhizium acridum (strain CQMa 102)).